Here is a 204-residue protein sequence, read N- to C-terminus: RNA-free ribonuclease P (204 aa).

This sequence belongs to the HARP family.

The enzyme catalyses Endonucleolytic cleavage of RNA, removing 5'-extranucleotides from tRNA precursor.. In terms of biological role, RNA-free RNase P that catalyzes the removal of the 5'-leader sequence from pre-tRNA to produce the mature 5'-terminus. In Ignicoccus hospitalis (strain KIN4/I / DSM 18386 / JCM 14125), this protein is RNA-free ribonuclease P.